The following is a 93-amino-acid chain: Small ribosomal subunit protein uS17 (93 aa).

The protein belongs to the universal ribosomal protein uS17 family. Part of the 30S ribosomal subunit.

Functionally, one of the primary rRNA binding proteins, it binds specifically to the 5'-end of 16S ribosomal RNA. This chain is Small ribosomal subunit protein uS17, found in Rhodococcus erythropolis (strain PR4 / NBRC 100887).